Consider the following 63-residue polypeptide: Overexpressed in colon carcinoma 1 protein homolog (63 aa).

Over residues 1 to 10 (MGCGNSTATS) the composition is skewed to polar residues. Residues 1 to 37 (MGCGNSTATSAAAGRGKPGAVKDATEDSITEDDKRRN) are disordered.

It belongs to the OCC1 family.

The sequence is that of Overexpressed in colon carcinoma 1 protein homolog from Rattus norvegicus (Rat).